Here is an 82-residue protein sequence, read N- to C-terminus: Small ribosomal subunit protein bS18 (82 aa).

It belongs to the bacterial ribosomal protein bS18 family. Part of the 30S ribosomal subunit. Forms a tight heterodimer with protein bS6.

Binds as a heterodimer with protein bS6 to the central domain of the 16S rRNA, where it helps stabilize the platform of the 30S subunit. The polypeptide is Small ribosomal subunit protein bS18 (Chlamydia felis (strain Fe/C-56) (Chlamydophila felis)).